Reading from the N-terminus, the 364-residue chain is Aminomethyltransferase (364 aa).

It belongs to the GcvT family. In terms of assembly, the glycine cleavage system is composed of four proteins: P, T, L and H.

It catalyses the reaction N(6)-[(R)-S(8)-aminomethyldihydrolipoyl]-L-lysyl-[protein] + (6S)-5,6,7,8-tetrahydrofolate = N(6)-[(R)-dihydrolipoyl]-L-lysyl-[protein] + (6R)-5,10-methylene-5,6,7,8-tetrahydrofolate + NH4(+). The glycine cleavage system catalyzes the degradation of glycine. The polypeptide is Aminomethyltransferase (Enterobacter sp. (strain 638)).